Reading from the N-terminus, the 767-residue chain is RNA cytosine C(5)-methyltransferase NSUN2 (767 aa).

The segment at 1–36 is disordered; sequence MGRRSRGRRLQQQQRPEDAEDGAEGGGKRGEAGWEG. A Glycyl lysine isopeptide (Lys-Gly) (interchain with G-Cter in SUMO2) cross-link involves residue Lys46. Residue Ser139 is modified to Phosphoserine; by AURKB. S-adenosyl-L-methionine-binding positions include 184–190, Asp215, Asp242, and Asp268; that span reads CAAPGSK. The Nucleophile role is filled by Cys321. The tract at residues 436 to 481 is disordered; sequence NKRQPKLQGKSAETRESTQLSPADLTEGKPTDPSKLESPSFTGTGD. A Phosphoserine modification is found at Ser456. The segment covering 461 to 470 has biased composition (basic and acidic residues); that stretch reads TEGKPTDPSK. Glycyl lysine isopeptide (Lys-Gly) (interchain with G-Cter in SUMO2) cross-links involve residues Lys464 and Lys470. Ser473 is subject to Phosphoserine. Residues Lys511 and Lys516 each participate in a glycyl lysine isopeptide (Lys-Gly) (interchain with G-Cter in SUMO2) cross-link. Lys586 bears the N6-acetyllysine; alternate mark. The residue at position 586 (Lys586) is an N6-malonyllysine; alternate. Lys586 participates in a covalent cross-link: Glycyl lysine isopeptide (Lys-Gly) (interchain with G-Cter in SUMO2); alternate. Ser593 carries the post-translational modification Phosphoserine. Glycyl lysine isopeptide (Lys-Gly) (interchain with G-Cter in SUMO2) cross-links involve residues Lys640, Lys654, and Lys660. Thr718 is modified (phosphothreonine). Over residues 719 to 730 the composition is skewed to polar residues; it reads NESAASTGQPDN. The disordered stretch occupies residues 719-767; it reads NESAASTGQPDNDVTEGQRAGEPNSPDAEEANSPDVTAGCDPAGVHPPR. 3 positions are modified to phosphoserine: Ser724, Ser743, and Ser751.

Belongs to the class I-like SAM-binding methyltransferase superfamily. RsmB/NOP family. TRM4 subfamily. In terms of assembly, interacts with NPM1 and NCL during interphase; interaction is disrupted following phosphorylation at Ser-139. Post-translationally, phosphorylated at Ser-139 by AURKB during mitosis, leading to abolish methyltransferase activity and the interaction with NPM1. Expressed in adult and fetal brain and in lymphoblastoid cells.

The protein resides in the nucleus. The protein localises to the nucleolus. Its subcellular location is the cytoplasm. It is found in the mitochondrion. It localises to the cytoskeleton. The protein resides in the spindle. The protein localises to the secreted. Its subcellular location is the extracellular exosome. The enzyme catalyses cytidine(48) in tRNA + S-adenosyl-L-methionine = 5-methylcytidine(48) in tRNA + S-adenosyl-L-homocysteine + H(+). The catalysed reaction is cytidine(49) in tRNA + S-adenosyl-L-methionine = 5-methylcytidine(49) in tRNA + S-adenosyl-L-homocysteine + H(+). It catalyses the reaction cytidine(50) in tRNA + S-adenosyl-L-methionine = 5-methylcytidine(50) in tRNA + S-adenosyl-L-homocysteine + H(+). It carries out the reaction cytidine(34) in tRNA precursor + S-adenosyl-L-methionine = 5-methylcytidine(34) in tRNA precursor + S-adenosyl-L-homocysteine + H(+). The enzyme catalyses a cytidine in mRNA + S-adenosyl-L-methionine = a 5-methylcytidine in mRNA + S-adenosyl-L-homocysteine + H(+). With respect to regulation, inhibited by magnesium ions. In terms of biological role, RNA cytosine C(5)-methyltransferase that methylates cytosine to 5-methylcytosine (m5C) in various RNAs, such as tRNAs, mRNAs and some long non-coding RNAs (lncRNAs). Involved in various processes, such as epidermal stem cell differentiation, testis differentiation and maternal to zygotic transition during early development: acts by increasing protein synthesis; cytosine C(5)-methylation promoting tRNA stability and preventing mRNA decay. Methylates cytosine to 5-methylcytosine (m5C) at positions 34 and 48 of intron-containing tRNA(Leu)(CAA) precursors, and at positions 48, 49 and 50 of tRNA(Gly)(GCC) precursors. tRNA methylation is required generation of RNA fragments derived from tRNAs (tRFs). Also mediates C(5)-methylation of mitochondrial tRNAs. Catalyzes cytosine C(5)-methylation of mRNAs, leading to stabilize them and prevent mRNA decay: mRNA stabilization involves YBX1 that specifically recognizes and binds m5C-modified transcripts. Cytosine C(5)-methylation of mRNAs also regulates mRNA export: methylated transcripts are specifically recognized by THOC4/ALYREF, which mediates mRNA nucleo-cytoplasmic shuttling. Also mediates cytosine C(5)-methylation of non-coding RNAs, such as vault RNAs (vtRNAs), promoting their processing into regulatory small RNAs. Cytosine C(5)-methylation of vtRNA VTRNA1.1 promotes its processing into small-vault RNA4 (svRNA4) and regulates epidermal differentiation. May act downstream of Myc to regulate epidermal cell growth and proliferation. Required for proper spindle assembly and chromosome segregation, independently of its methyltransferase activity. The polypeptide is RNA cytosine C(5)-methyltransferase NSUN2 (Homo sapiens (Human)).